The following is a 247-amino-acid chain: Flavin-dependent thymidylate synthase (247 aa).

In terms of domain architecture, ThyX spans 1 to 237 (MRVRLLEATE…PHTFEYYDAE (237 aa)). DUMP-binding positions include 85 to 88 (QLTR), 98 to 100 (SMR), and Arg176. 88-90 (RHR) serves as a coordination point for FAD. The ThyX motif signature appears at 88–98 (RHRHASFDVQS). FAD is bound by residues 192–194 (NPR) and His198. A dUMP-binding site is contributed by Arg203. Arg203 (involved in ionization of N3 of dUMP, leading to its activation) is an active-site residue.

Belongs to the thymidylate synthase ThyX family. In terms of assembly, homotetramer. It depends on FAD as a cofactor.

It catalyses the reaction dUMP + (6R)-5,10-methylene-5,6,7,8-tetrahydrofolate + NADPH + H(+) = dTMP + (6S)-5,6,7,8-tetrahydrofolate + NADP(+). Its pathway is pyrimidine metabolism; dTTP biosynthesis. Catalyzes the reductive methylation of 2'-deoxyuridine-5'-monophosphate (dUMP) to 2'-deoxythymidine-5'-monophosphate (dTMP) while utilizing 5,10-methylenetetrahydrofolate (mTHF) as the methyl donor, and NADPH and FADH(2) as the reductant. This is Flavin-dependent thymidylate synthase from Halobacterium salinarum (strain ATCC 700922 / JCM 11081 / NRC-1) (Halobacterium halobium).